We begin with the raw amino-acid sequence, 288 residues long: Bis(5'-nucleosyl)-tetraphosphatase, symmetrical (288 aa).

This sequence belongs to the Ap4A hydrolase family.

It catalyses the reaction P(1),P(4)-bis(5'-adenosyl) tetraphosphate + H2O = 2 ADP + 2 H(+). Functionally, hydrolyzes diadenosine 5',5'''-P1,P4-tetraphosphate to yield ADP. This Baumannia cicadellinicola subsp. Homalodisca coagulata protein is Bis(5'-nucleosyl)-tetraphosphatase, symmetrical.